Reading from the N-terminus, the 884-residue chain is Formin-like protein 11 (884 aa).

The N-terminal stretch at 1–18 (MVYFRQIFLMIIVVSLHC) is a signal peptide. Positions 89-143 (AESASFSPWPAPSPSPFPNGGPIESPAYPPAPPRPIPPHLRRPLPQRTHPLEQPE) are disordered. Pro residues-rich tracts occupy residues 97–107 (WPAPSPSPFPN) and 115–126 (AYPPAPPRPIPP). The chain crosses the membrane as a helical span at residues 158–178 (ILVPVVASTASAIGFVVCVVG). Disordered regions lie at residues 307–384 (SSDD…FSNK), 416–469 (SFPI…APLP), and 512–532 (MQSSTKNEEGKSKTPSPGKHL). Low complexity predominate over residues 329–343 (SNASSASGSVNVGSS). Basic and acidic residues predominate over residues 346-358 (FSEHKLDIPECSR). Pro residues-rich tracts occupy residues 367-379 (APPPPPPPPPPLP) and 425-436 (QPRPPPPPPPPQ). Residues 461–884 (LGKDGAPLPK…NSPSPLAPFR (424 aa)) enclose the FH2 domain.

This sequence belongs to the formin-like family. Class-I subfamily.

It is found in the membrane. Functionally, might be involved in the organization and polarity of the actin cytoskeleton. The sequence is that of Formin-like protein 11 (FH11) from Arabidopsis thaliana (Mouse-ear cress).